We begin with the raw amino-acid sequence, 76 residues long: Rhesus theta defensin-1/2 subunit B (76 aa).

An N-terminal signal peptide occupies residues 1–22 (MRTFALLTAMLLLVALHAQAEA). A propeptide spanning residues 23 to 64 (RQARADEAAAQQQPGADDQGMAHSFTRPENAALPLSESARGL) is cleaved from the precursor. Residues 25 to 54 (ARADEAAAQQQPGADDQGMAHSFTRPENAA) are disordered. Residues 30 to 44 (AAAQQQPGADDQGMA) are compositionally biased toward low complexity. R65 participates in a covalent cross-link: Cyclopeptide (Arg-Cys) (interchain with C-73 in subunit A); in form RTD-1. A Cyclopeptide (Arg-Cys) (interchain with C-73 in subunit B); in form RTD-2 cross-link involves residue R65. The cysteines at positions 68 and 73 are disulfide-linked. A Cyclopeptide (Cys-Arg) (interchain with R-65 in subunit A); in form RTD-1 cross-link involves residue C73. A Cyclopeptide (Cys-Arg) (interchain with R-65 in subunit B); in form RTD-2 cross-link involves residue C73. A propeptide spanning residues 74–76 (QLL) is cleaved from the precursor.

The protein belongs to the alpha-defensin family. Theta subfamily. RTD-1 is a cyclic heterodimer composed of subunits A and B; disulfide-linked. RTD-2 is a cyclic homodimer composed of two subunits B; disulfide-linked. Post-translationally, forms a cyclic peptide with 1 subunit B (RTD-2) or with 1 subunit A (RTD-1). An additional intersubunit disulfide bond is formed. In terms of tissue distribution, RTD-1 is expressed in bone marrow. Detected in promyelocytes, myelocytes and mature neutrophils and monocytes.

In terms of biological role, RTD-1 and RTD-2 have similar antimicrobial activities against the Gram-positive bacteria S.aureus 502A and L.monocytogenes, the Gram-negative bacterium S.typhimurium, and the fungi C.albicans 16820 and C.neoformans 271A. RTD-2 is 2-3-fold less active than RTD-1 against E.coli ML35. The sequence is that of Rhesus theta defensin-1/2 subunit B (RTD1B) from Macaca mulatta (Rhesus macaque).